We begin with the raw amino-acid sequence, 775 residues long: Subtilisin-like protease SBT1.5 (775 aa).

An N-terminal signal peptide occupies residues 1-19; that stretch reads MAFFFYFFFLLTLSSPSSS. Residues 20-103 constitute a propeptide, activation peptide; sequence ASSSNSLTYI…VIPEQVRHLH (84 aa). Positions 27 to 103 constitute an Inhibitor I9 domain; sequence TYIVHVDHEA…VIPEQVRHLH (77 aa). One can recognise a Peptidase S8 domain in the interval 107 to 617; it reads SPEFLGLRST…SGHVHPTKAM (511 aa). Asp137 functions as the Charge relay system in the catalytic mechanism. N-linked (GlcNAc...) asparagine glycosylation is present at Asn196. The Charge relay system role is filled by His210. The region spanning 367-459 is the PA domain; it reads MYPLVYGGSL…VGASGGDEIR (93 aa). Ser549 serves as the catalytic Charge relay system. Residues Asn599, Asn638, and Asn762 are each glycosylated (N-linked (GlcNAc...) asparagine).

This sequence belongs to the peptidase S8 family.

The protein localises to the secreted. This Arabidopsis thaliana (Mouse-ear cress) protein is Subtilisin-like protease SBT1.5.